Here is a 331-residue protein sequence, read N- to C-terminus: Holliday junction branch migration complex subunit RuvB (331 aa).

Positions methionine 1–tyrosine 182 are large ATPase domain (RuvB-L). ATP-binding positions include leucine 21, arginine 22, glycine 63, lysine 66, threonine 67, threonine 68, glutamate 129–tyrosine 131, arginine 172, tyrosine 182, and arginine 219. Mg(2+) is bound at residue threonine 67. The small ATPAse domain (RuvB-S) stretch occupies residues serine 183–glycine 254. The head domain (RuvB-H) stretch occupies residues glycine 257 to isoleucine 331. Residues arginine 310 and arginine 315 each contribute to the DNA site.

Belongs to the RuvB family. In terms of assembly, homohexamer. Forms an RuvA(8)-RuvB(12)-Holliday junction (HJ) complex. HJ DNA is sandwiched between 2 RuvA tetramers; dsDNA enters through RuvA and exits via RuvB. An RuvB hexamer assembles on each DNA strand where it exits the tetramer. Each RuvB hexamer is contacted by two RuvA subunits (via domain III) on 2 adjacent RuvB subunits; this complex drives branch migration. In the full resolvosome a probable DNA-RuvA(4)-RuvB(12)-RuvC(2) complex forms which resolves the HJ.

The protein resides in the cytoplasm. The catalysed reaction is ATP + H2O = ADP + phosphate + H(+). Its function is as follows. The RuvA-RuvB-RuvC complex processes Holliday junction (HJ) DNA during genetic recombination and DNA repair, while the RuvA-RuvB complex plays an important role in the rescue of blocked DNA replication forks via replication fork reversal (RFR). RuvA specifically binds to HJ cruciform DNA, conferring on it an open structure. The RuvB hexamer acts as an ATP-dependent pump, pulling dsDNA into and through the RuvAB complex. RuvB forms 2 homohexamers on either side of HJ DNA bound by 1 or 2 RuvA tetramers; 4 subunits per hexamer contact DNA at a time. Coordinated motions by a converter formed by DNA-disengaged RuvB subunits stimulates ATP hydrolysis and nucleotide exchange. Immobilization of the converter enables RuvB to convert the ATP-contained energy into a lever motion, pulling 2 nucleotides of DNA out of the RuvA tetramer per ATP hydrolyzed, thus driving DNA branch migration. The RuvB motors rotate together with the DNA substrate, which together with the progressing nucleotide cycle form the mechanistic basis for DNA recombination by continuous HJ branch migration. Branch migration allows RuvC to scan DNA until it finds its consensus sequence, where it cleaves and resolves cruciform DNA. This is Holliday junction branch migration complex subunit RuvB from Anaplasma marginale (strain Florida).